Here is a 352-residue protein sequence, read N- to C-terminus: MDTAKWPQEFVVKPMNEIVTNTCLKQQSNPPSPATPVERKARPEKDQALNCPRCNSLNTKFCYYNNYSLTQPRYFCKDCRRYWTAGGSLRNIPVGGGVRKNKRSSSNSSSSSPSSSSSSKKPLFANNNTPTPPLPHLNPKIGEAAATKVQDLTFSQGFGNAHEVKDLNLAFSQGFGIGHNHHSSIPEFLQVVPSSSMKNNPLVSTSSSLELLGISSSSASSNSRPAFMSYPNVHDSSVYTASGFGLSYPQFQEFMRPALGFSLDGGDPLRQEEGSSGTNNGRPLLPFESLLKLPVSSSSTNSGGNGNLKENNDEHSDHEHEKEEGEADQSVGFWSGMLSAGASAAASGGSWQ.

The tract at residues 24-46 is disordered; the sequence is LKQQSNPPSPATPVERKARPEKD. The segment covering 37–46 has biased composition (basic and acidic residues); the sequence is VERKARPEKD. A Dof-type zinc finger spans residues 49–103; the sequence is LNCPRCNSLNTKFCYYNNYSLTQPRYFCKDCRRYWTAGGSLRNIPVGGGVRKNKR. Zn(2+) is bound by residues cysteine 51, cysteine 54, cysteine 76, and cysteine 79. Disordered stretches follow at residues 93–136 and 265–334; these read PVGG…PLPH and GGDP…VGFW. The span at 104 to 129 shows a compositional bias: low complexity; it reads SSSNSSSSSPSSSSSSKKPLFANNNT. The segment covering 310–323 has biased composition (basic and acidic residues); that stretch reads ENNDEHSDHEHEKE.

The protein localises to the nucleus. Transcription factor that binds specifically to a 5'-AA[AG]G-3' consensus core sequence. This chain is Dof zinc finger protein DOF1.8 (DOF1.8), found in Arabidopsis thaliana (Mouse-ear cress).